A 279-amino-acid polypeptide reads, in one-letter code: MAFQGTSRTLTQQSSAATSDDLQKILFSPEAIKKMATECDLGRHHWMRADSAISVRPLVPEVTHGRIASFFKSGYDVGELCSKGYMSVPQVLCAVTRTVSTDAEGSLRIYLADLGDKELSPIDGQCVSLHNHDLPALVSFQPTYDCPMETVGNRKRCFAVVIERHGYIGYTGTTASVCSNWQARFSSKNNNYTHIAAGKTLVLPFNRLAEQTKPSAVARLLKSQLNNIESSQYLLTNAKINQNARSESEELNVESPPAAIGSSSASRSEAFRPQVVNGL.

The interval 246–279 (SESEELNVESPPAAIGSSSASRSEAFRPQVVNGL) is disordered. Positions 254–268 (ESPPAAIGSSSASRS) are enriched in low complexity.

The protein belongs to the cucumovirus movement protein family.

The protein resides in the host cell junction. Its subcellular location is the host plasmodesma. In terms of biological role, transports viral genome to neighboring plant cells directly through plasmosdesmata, without any budding. The movement protein allows efficient cell to cell propagation, by bypassing the host cell wall barrier. Acts by forming a tubular structure at the host plasmodesmata, enlarging it enough to allow free passage of virion capsids. The sequence is that of Movement protein from Cucumber mosaic virus (strain O) (CMV).